Reading from the N-terminus, the 43-residue chain is Metallothionein-2 (43 aa).

A Blocked amino end (Met) modification is found at methionine 1.

This sequence belongs to the metallothionein superfamily. Type 5 family.

In terms of biological role, this protein binds cations of several transition elements. Thought to be involved in metal ion homeostasis. In Drosophila melanogaster (Fruit fly), this protein is Metallothionein-2 (MtnB).